The sequence spans 118 residues: Cell division protein FtsB (118 aa).

The Cytoplasmic segment spans residues 1–6; sequence MRNWRW. The chain crosses the membrane as a helical span at residues 7 to 24; it reads LLLVLAALLSWLQHRFWF. At 25–118 the chain is on the periplasmic side; sequence GPGNSGEVRM…DLAQPRREKR (94 aa). The stretch at 30-66 forms a coiled coil; that stretch reads GEVRMLQVQIVQQHQENERLRQRNASLAAEVKNLKDG. The interval 97 to 118 is disordered; sequence PLPNDTSADHGVDLAQPRREKR. The segment covering 103-118 has biased composition (basic and acidic residues); sequence SADHGVDLAQPRREKR.

It belongs to the FtsB family. As to quaternary structure, part of a complex composed of FtsB, FtsL and FtsQ.

It localises to the cell inner membrane. In terms of biological role, essential cell division protein. May link together the upstream cell division proteins, which are predominantly cytoplasmic, with the downstream cell division proteins, which are predominantly periplasmic. The polypeptide is Cell division protein FtsB (Xylella fastidiosa (strain 9a5c)).